The chain runs to 205 residues: Small ribosomal subunit protein uS4 (205 aa).

The interval 17–46 is disordered; that stretch reads ENIWGRPKSPVNKREYGPGQHGQRRKGKLS. Residues 94-157 enclose the S4 RNA-binding domain; that stretch reads SRLDAVVYRA…KQLVIVLESV (64 aa).

It belongs to the universal ribosomal protein uS4 family. In terms of assembly, part of the 30S ribosomal subunit. Contacts protein S5. The interaction surface between S4 and S5 is involved in control of translational fidelity.

Functionally, one of the primary rRNA binding proteins, it binds directly to 16S rRNA where it nucleates assembly of the body of the 30S subunit. With S5 and S12 plays an important role in translational accuracy. The sequence is that of Small ribosomal subunit protein uS4 from Mesorhizobium japonicum (strain LMG 29417 / CECT 9101 / MAFF 303099) (Mesorhizobium loti (strain MAFF 303099)).